Here is a 233-residue protein sequence, read N- to C-terminus: Large ribosomal subunit protein uL3 (233 aa).

Belongs to the universal ribosomal protein uL3 family. As to quaternary structure, part of the 50S ribosomal subunit. Forms a cluster with proteins L14 and L19.

One of the primary rRNA binding proteins, it binds directly near the 3'-end of the 23S rRNA, where it nucleates assembly of the 50S subunit. In Ureaplasma parvum serovar 3 (strain ATCC 27815 / 27 / NCTC 11736), this protein is Large ribosomal subunit protein uL3.